The chain runs to 1727 residues: Eukaryotic translation initiation factor 4G (1727 aa).

Disordered regions lie at residues 1-154 (MSYN…VAAS), 172-252 (LMVP…QKSP), 360-423 (PQQQ…FAPR), 552-581 (ACSL…KSPV), 678-736 (VSTT…SVIS), and 784-815 (LSST…GKKK). Residues 25-38 (QQQQQQHRSSSAAG) are compositionally biased toward low complexity. A compositionally biased stretch (polar residues) spans 55–65 (YPDNSSLSSNR). Low complexity predominate over residues 79–97 (PRVNLPPVNHPNNHNNGPN). 3 stretches are compositionally biased toward polar residues: residues 114–124 (TNPTESFNRNT), 131–148 (PTSQ…TPNT), and 191–205 (AQMQ…SNVP). 2 stretches are compositionally biased toward basic and acidic residues: residues 222-236 (LMRK…EKAD) and 379-395 (THPD…RGDP). Polar residues-rich tracts occupy residues 552–562 (ACSLSSSQQPK) and 678–692 (VSTT…SVDT). Positions 699–712 (EGSSHASSEISGSS) are enriched in low complexity. Over residues 714–736 (QEKDLKCDNRTASDKLDERSVIS) the composition is skewed to basic and acidic residues. The span at 800–810 (VETNTRRNTST) shows a compositional bias: polar residues. Positions 916-928 (TEKKYSRDFLLKF) are EIF4E-binding. Disordered stretches follow at residues 977–1007 (GARL…YGGN), 1188–1212 (GEKE…EERE), 1336–1375 (HRDA…GGGG), and 1446–1492 (ASNT…QERG). Composition is skewed to basic and acidic residues over residues 979 to 994 (RLDR…DRWT) and 1188 to 1200 (GEKE…RVAE). At serine 985 the chain carries Phosphoserine. An MIF4G domain is found at 1096 to 1319 (QRQLKSILNK…INAIDLRKNK (224 aa)). The span at 1202 to 1211 (GQVEQTEEER) shows a compositional bias: acidic residues. Composition is skewed to polar residues over residues 1342–1360 (ERQT…NSSG) and 1446–1455 (ASNTYQSDAT). Serine 1529 bears the Phosphoserine mark. An MI domain is found at 1539 to 1663 (QLENLSLSAI…TLTEIGRLIQ (125 aa)).

This sequence belongs to the eukaryotic initiation factor 4G family. As to quaternary structure, EIF4F is a multi-subunit complex, the composition of which varies with external and internal environmental conditions. It is composed of at least EIF4A, EIF4E and EIF4G. In higher plants two isoforms of EIF4F have been identified, named isoform EIF4F and isoform EIF(iso)4F. Isoform EIF4F has subunits p220 and p26, whereas isoform EIF(iso)4F has subunits p82 and p28.

Its function is as follows. Component of the protein complex eIF4F, which is involved in the recognition of the mRNA cap, ATP-dependent unwinding of 5'-terminal secondary structure and recruitment of mRNA to the ribosome. Plays a role in the accumulation of some potyvirus during viral infection. Required for the accumulation of cucumber mosaic virus 3a protein and turnip crinkle virus p28 replication protein during viral infection. These proteins are necessary for cell-to-cell movement of the virus. This is Eukaryotic translation initiation factor 4G (EIF4G) from Arabidopsis thaliana (Mouse-ear cress).